Reading from the N-terminus, the 218-residue chain is Attacin-B (218 aa).

Positions Met-1–Ala-17 are cleaved as a signal peptide. Positions Val-18–Arg-28 are excised as a propeptide.

The protein belongs to the attacin/sarcotoxin-2 family. As to expression, hemolymph (at protein level).

The protein localises to the secreted. In terms of biological role, hemolymph antibacterial protein. The sequence is that of Attacin-B (AttB) from Drosophila melanogaster (Fruit fly).